The sequence spans 272 residues: Putative hydro-lyase BRADO2538 (272 aa).

This sequence belongs to the D-glutamate cyclase family.

The polypeptide is Putative hydro-lyase BRADO2538 (Bradyrhizobium sp. (strain ORS 278)).